The following is a 249-amino-acid chain: 5'-nucleotidase SurE (249 aa).

Positions 9, 10, 40, and 92 each coordinate a divalent metal cation.

It belongs to the SurE nucleotidase family. A divalent metal cation is required as a cofactor.

It localises to the cytoplasm. The catalysed reaction is a ribonucleoside 5'-phosphate + H2O = a ribonucleoside + phosphate. Its function is as follows. Nucleotidase that shows phosphatase activity on nucleoside 5'-monophosphates. This Shewanella sp. (strain MR-4) protein is 5'-nucleotidase SurE.